Consider the following 31-residue polypeptide: HSQGMFTNDFSKYLEEEHAKEFVEWLKNGKS.

The protein belongs to the glucagon family.

Its subcellular location is the secreted. Glucagon plays a key role in glucose metabolism and homeostasis. Regulates blood glucose by increasing gluconeogenesis and decreasing glycolysis. The polypeptide is Glucagon-3 (Huso dauricus (Kaluga sturgeon)).